The primary structure comprises 701 residues: Rab-like protein 6 (701 aa).

Met1 is modified (N-acetylmethionine). Residues 39–279 (GVQYNMKIVI…IFLEMMEARS (241 aa)) are small GTPase-like. GTP contacts are provided by residues 50 to 57 (GDRNTGKT), 100 to 104 (DVVDK), and 177 to 179 (YRD). The interval 279–701 (SRGHASPLTT…LRGGGDYEAL (423 aa)) is disordered. Residues 284-315 (SPLTTSGQSPSSGSQSPVVPPSTVSTGSSSPS) show a composition bias toward low complexity. Residues 316 to 344 (TPQPVLQPPLQAPPAPPAPAEAPPLPAAP) show a composition bias toward pro residues. 5 positions are modified to phosphoserine: Ser394, Ser416, Ser418, Ser461, and Ser462. The span at 495-506 (ALGPPRDAAPRA) shows a compositional bias: low complexity. Ser552 carries the post-translational modification Phosphoserine. Positions 555-569 (DAQRRAGEFPVREDL) are enriched in basic and acidic residues. Position 570 is a phosphoserine (Ser570). Thr573 carries the phosphothreonine modification. Over residues 580-589 (VQPPAPPKPL) the composition is skewed to pro residues. Residues 608–626 (EPGREDSSEQDKEGRPPAK) are compositionally biased toward basic and acidic residues. 2 positions are modified to phosphoserine: Ser614 and Ser615. The segment at 629–667 (KKKKKKGREEEDKAAKKRSKHKKSRERADDKGRDERRRR) is interaction with CDKN2A. Residues 643–653 (AKKRSKHKKSR) show a composition bias toward basic residues. The span at 654–665 (ERADDKGRDERR) shows a compositional bias: basic and acidic residues. Residues 683-701 (LGGGAPSGPLRGGGDYEAL) are compositionally biased toward gly residues.

It belongs to the small GTPase superfamily. Rab family.

Its subcellular location is the nucleus. The protein localises to the cytoplasm. Functionally, may enhance cellular proliferation. May reduce growth inhibitory activity of CDKN2A. The sequence is that of Rab-like protein 6 (RABL6) from Bos taurus (Bovine).